The primary structure comprises 420 residues: Serine hydroxymethyltransferase (420 aa).

(6S)-5,6,7,8-tetrahydrofolate contacts are provided by residues leucine 123 and 127–129; that span reads GHL. Lysine 232 is modified (N6-(pyridoxal phosphate)lysine). Residue 357 to 359 coordinates (6S)-5,6,7,8-tetrahydrofolate; that stretch reads SPF.

This sequence belongs to the SHMT family. Homodimer. Pyridoxal 5'-phosphate serves as cofactor.

It is found in the cytoplasm. It catalyses the reaction (6R)-5,10-methylene-5,6,7,8-tetrahydrofolate + glycine + H2O = (6S)-5,6,7,8-tetrahydrofolate + L-serine. It functions in the pathway one-carbon metabolism; tetrahydrofolate interconversion. It participates in amino-acid biosynthesis; glycine biosynthesis; glycine from L-serine: step 1/1. Catalyzes the reversible interconversion of serine and glycine with tetrahydrofolate (THF) serving as the one-carbon carrier. This reaction serves as the major source of one-carbon groups required for the biosynthesis of purines, thymidylate, methionine, and other important biomolecules. Also exhibits THF-independent aldolase activity toward beta-hydroxyamino acids, producing glycine and aldehydes, via a retro-aldol mechanism. The polypeptide is Serine hydroxymethyltransferase (Streptococcus pyogenes serotype M4 (strain MGAS10750)).